The sequence spans 87 residues: MANSAQARKRARQSLKARAHNASLRTAYRTAVKKVIKAVEAGDKAAAQAQLVTSTSIMDRIADKGVFHKNKASRQKSRLSAAIKAMA.

The disordered stretch occupies residues Met1–Ala22. The span at Ala7–Ala19 shows a compositional bias: basic residues.

This sequence belongs to the bacterial ribosomal protein bS20 family.

Its function is as follows. Binds directly to 16S ribosomal RNA. This Laribacter hongkongensis (strain HLHK9) protein is Small ribosomal subunit protein bS20.